Reading from the N-terminus, the 240-residue chain is Uridylate kinase (240 aa).

Residue 9-12 (KLSG) coordinates ATP. Glycine 51 provides a ligand contact to UMP. Residues glycine 52 and arginine 56 each coordinate ATP. UMP contacts are provided by residues aspartate 71 and 132–139 (TGNPFFTT). ATP is bound by residues threonine 159, tyrosine 165, and aspartate 168.

It belongs to the UMP kinase family. In terms of assembly, homohexamer.

The protein resides in the cytoplasm. The enzyme catalyses UMP + ATP = UDP + ADP. The protein operates within pyrimidine metabolism; CTP biosynthesis via de novo pathway; UDP from UMP (UMPK route): step 1/1. Inhibited by UTP. Catalyzes the reversible phosphorylation of UMP to UDP. This is Uridylate kinase from Synechococcus elongatus (strain ATCC 33912 / PCC 7942 / FACHB-805) (Anacystis nidulans R2).